A 376-amino-acid chain; its full sequence is Chaperone protein DnaJ (376 aa).

Residues 5–70 form the J domain; sequence DYYEVLGVAR…NKRRAYDAHG (66 aa). A CR-type zinc finger spans residues 132–209; sequence GIERRIEIPT…CHGAGRVEED (78 aa). Zn(2+) contacts are provided by cysteine 145, cysteine 148, cysteine 161, cysteine 164, cysteine 183, cysteine 186, cysteine 197, and cysteine 200. 4 CXXCXGXG motif repeats span residues 145-152, 161-168, 183-190, and 197-204; these read CEPCHGSG, CATCHGRG, CPHCDGRG, and CKTCHGAG.

This sequence belongs to the DnaJ family. Homodimer. The cofactor is Zn(2+).

It is found in the cytoplasm. Functionally, participates actively in the response to hyperosmotic and heat shock by preventing the aggregation of stress-denatured proteins and by disaggregating proteins, also in an autonomous, DnaK-independent fashion. Unfolded proteins bind initially to DnaJ; upon interaction with the DnaJ-bound protein, DnaK hydrolyzes its bound ATP, resulting in the formation of a stable complex. GrpE releases ADP from DnaK; ATP binding to DnaK triggers the release of the substrate protein, thus completing the reaction cycle. Several rounds of ATP-dependent interactions between DnaJ, DnaK and GrpE are required for fully efficient folding. Also involved, together with DnaK and GrpE, in the DNA replication of plasmids through activation of initiation proteins. The protein is Chaperone protein DnaJ of Xanthomonas campestris pv. campestris (strain 8004).